Here is a 1098-residue protein sequence, read N- to C-terminus: WD repeat-containing protein 72 (1098 aa).

WD repeat units follow at residues 15 to 54, 60 to 102, 158 to 196, 315 to 359, 399 to 438, 456 to 501, 504 to 549, and 552 to 591; these read APPHSITAIMITDDQRMIVTGSQEGQLCLWNLSHELKISA, GHSA…CVEK, WINCMCIVHSMRIQDSLLVVSVAGELKVWDLSSSINSIQ, ENKN…VSKF, AGTAVVTSSEYIPSLDKLICGCEDGTIIITQALNAAKARL, GHHQ…ILHK, LEAG…CLLR, and KHLFPVKMIKWHPVENFLIVGCADDSVYIWEIETGTLERH. A phosphoserine mark is found at serine 1077 and serine 1079.

It is found in the cytoplasmic vesicle. Functionally, plays a major role in formation of tooth enamel. Specifically required during the maturation phase of amelogenesis for normal formation of the enamel matrix and clearance of enamel proteins. May be involved in localization of the calcium transporter SLC24A4 to the ameloblast cell membrane. The chain is WD repeat-containing protein 72 (WDR72) from Pongo abelii (Sumatran orangutan).